A 323-amino-acid chain; its full sequence is tRNA (guanine(9)-N1)-methyltransferase (323 aa).

A compositionally biased stretch (polar residues) spans 1 to 16 (MTEQTSEATVVNNSPA). Disordered stretches follow at residues 1–34 (MTEQTSEATVVNNSPAPTIPKIKREKPTPEEIEE) and 192–215 (TGAPNSESKDNDGNSNSNTTNSTD). A compositionally biased stretch (basic and acidic residues) spans 25-34 (EKPTPEEIEE). Positions 99 to 319 (KAQPIPSRQI…KVLPPRKIKS (221 aa)) constitute an SAM-dependent MTase TRM10-type domain. Residues 204–215 (GNSNSNTTNSTD) show a composition bias toward low complexity. Residues 225–226 (LT), glycine 245, 249–253 (DKNRH), cysteine 257, leucine 271, and 283–285 (HVL) contribute to the S-adenosyl-L-methionine site. Aspartate 249 functions as the Proton acceptor in the catalytic mechanism.

Belongs to the class IV-like SAM-binding methyltransferase superfamily. TRM10 family. As to quaternary structure, monomer.

It is found in the cytoplasm. It localises to the nucleus. The catalysed reaction is guanosine(9) in tRNA + S-adenosyl-L-methionine = N(1)-methylguanosine(9) in tRNA + S-adenosyl-L-homocysteine + H(+). Functionally, S-adenosyl-L-methionine-dependent guanine N(1)-methyltransferase that catalyzes the formation of N(1)-methylguanine at position 9 (m1G9) in cytoplasmic tRNA. This chain is tRNA (guanine(9)-N1)-methyltransferase, found in Candida albicans (strain SC5314 / ATCC MYA-2876) (Yeast).